The sequence spans 294 residues: Serine/threonine-protein kinase Aurora-1 (294 aa).

Residues 31–282 (FDIGKPLGRG…LHKLLEHPWI (252 aa)) enclose the Protein kinase domain. Residues 37–45 (LGRGKFGHV) and lysine 60 each bind ATP. Aspartate 154 (proton acceptor) is an active-site residue. Serine 176 carries the post-translational modification Phosphoserine. A Phosphothreonine modification is found at threonine 185.

The protein belongs to the protein kinase superfamily. Ser/Thr protein kinase family. Aurora subfamily. As to quaternary structure, interacts with TPX2. Post-translationally, phosphorylation at Thr-185 may regulate activity and degradation of AUR1 in a cell cycle dependent manner. Abundant in roots, flowers and flower buds, low or absent in expanded leaves, stems and siliques.

Its subcellular location is the nucleus membrane. The protein localises to the cytoplasm. It localises to the cytoskeleton. The protein resides in the spindle. It is found in the spindle pole. Its subcellular location is the phragmoplast. It carries out the reaction L-seryl-[protein] + ATP = O-phospho-L-seryl-[protein] + ADP + H(+). It catalyses the reaction L-threonyl-[protein] + ATP = O-phospho-L-threonyl-[protein] + ADP + H(+). Phosphorylates specifically 'Ser-10' of histone H3 in vitro and colocalizes with phosphorylated histone H3 during mitosis. Associates with cytoskeletal structures that are necessary for cytokinesis and with the microtubule spindle. Also colocalizes with gamma-tubulin and function in microtubule organizing centers (MTOCs). In contrast with the mammalian B-type Aurora, AUR1 has no kinase activity toward 'Ser-28' of histone H3. The protein is Serine/threonine-protein kinase Aurora-1 (AUR1) of Arabidopsis thaliana (Mouse-ear cress).